The primary structure comprises 593 residues: Auxin response factor 12 (593 aa).

Positions 126–228 (FTKVLTASDT…ELRVGIRRAR (103 aa)) form a DNA-binding region, TF-B3. The PB1 domain occupies 511-592 (RTCTKVQMQG…MVKKIFIQKR (82 aa)).

It belongs to the ARF family. In terms of assembly, homodimers and heterodimers.

The protein localises to the nucleus. Auxin response factors (ARFs) are transcriptional factors that bind specifically to the DNA sequence 5'-TGTCTC-3' found in the auxin-responsive promoter elements (AuxREs). Could act as transcriptional activator or repressor. Formation of heterodimers with Aux/IAA proteins may alter their ability to modulate early auxin response genes expression. The sequence is that of Auxin response factor 12 (ARF12) from Arabidopsis thaliana (Mouse-ear cress).